The primary structure comprises 287 residues: MEHSRERGRSSNMRHNSREPYENPSRSRSLSRDPNQVDRRQPRSASQIRVPNLFHRKKTDALIVPPAPKDICPTLKKGFLCDSKFCKKDHQLDSLNDHELLLLIARRTCGIIESNSQITSPKDMRLANPTAEDFSQGNSPKLTLAVLLQIAEHWATRDLRQIEDSKLRALLTLCAVLTRKFSKSQLGLLCETHLRHEGLGQDQADSVLEVYQRLHSDKGGNFEAALWQQWDRQSLIMFISAFLNIALQTPCESSSVVVSGLATLYPAQDNSTPSEATNDTTWSSTVE.

Positions 1 to 52 are disordered; that stretch reads MEHSRERGRSSNMRHNSREPYENPSRSRSLSRDPNQVDRRQPRSASQIRVPN. The segment covering 24–34 has biased composition (polar residues); it reads PSRSRSLSRDP. The segment at 26–40 is RNA-binding; sequence RSRSLSRDPNQVDRR. The C3H1-type; atypical zinc finger occupies 72–90; that stretch reads CPTLKKGFLCDSKFCKKDH. Residues 94-112 form an oligomerization region; it reads SLNDHELLLLIARRTCGII. Residues 180–197 form an interaction with the nucleoprotein region; the sequence is KFSKSQLGLLCETHLRHE. A disordered region spans residues 268-287; the sequence is QDNSTPSEATNDTTWSSTVE.

Belongs to the filoviridae transcriptional activator VP30 family. As to quaternary structure, homohexamer; hexamerization is essential for RNA binding. Interacts with the nucleoprotein/NP; this interaction plays both essential and inhibitory roles in viral RNA synthesis. Interacts with VP35. Interacts with host STAU1. Interacts (via C-terminus) with host RBBP6 isoform 1. Interacts with host DICER1; this interaction prevents TARBP2/TRBP binding to DICER1 and thus allows the virus to counteract host RNA silencing. Interacts with host TARBP2/TRBP; this interaction, which occurs only in the presence of siRNA, prevents TARBP2 binding to DICER1 and thus allows the virus to counteract host RNA silencing. Phosphorylated by host. Phosphorylation negatively regulates the transcription activation. Phosphorylation and dephosphorylation take place in viral inclusion bodies and are largely influenced by the presence of NP. Dephosphorylated by host PPP2R5C; this dephosphorylation enhances viral transcription and is mediated by NP.

It localises to the virion. The protein resides in the host cytoplasm. Functionally, multifunctional protein that acts as a viral transcriptional activator. Promotes read-through of an RNA hairpin in the NP open reading frame to enhance viral transcription. Mechanistically, nonphosphorylated VP30 hexamers form a ternary complex with the viral leader RNA. Clamps the RNA template and the complex VP35-polymerase L together, thereby increasing the polymerase affinity for the RNA template to increase transcription initiation despite the presence of RNA secondary structures. Also assists stop-start transcription at gene junctions to promote transcription of downstream genes. Interaction with NP plays a critical role in transcription initiation by recognizing the RNA stem loop. Interaction with host RBBP6 interferes with NP-VP30 interaction and inhibits viral RNA synthesis. Also acts as a suppressor of RNA silencing by interacting with host DICER1 and TARBP2/TRBP. This chain is Transcriptional activator VP30 (VP30), found in Reston ebolavirus (strain Philippines-96) (REBOV).